The primary structure comprises 202 residues: Dephospho-CoA kinase (202 aa).

A DPCK domain is found at 4–202; that stretch reads VIGLTGGIAT…TDKGFINKER (199 aa). Position 12-17 (12-17) interacts with ATP; the sequence is ATGKST.

This sequence belongs to the CoaE family.

It localises to the cytoplasm. It carries out the reaction 3'-dephospho-CoA + ATP = ADP + CoA + H(+). Its pathway is cofactor biosynthesis; coenzyme A biosynthesis; CoA from (R)-pantothenate: step 5/5. Catalyzes the phosphorylation of the 3'-hydroxyl group of dephosphocoenzyme A to form coenzyme A. This Staphylococcus haemolyticus (strain JCSC1435) protein is Dephospho-CoA kinase.